A 91-amino-acid polypeptide reads, in one-letter code: Small ribosomal subunit protein bS20 (91 aa).

Residues 1-18 (MPLHKSAEKRLRQSERRN) show a composition bias toward basic and acidic residues. The disordered stretch occupies residues 1–25 (MPLHKSAEKRLRQSERRNARNRARK).

The protein belongs to the bacterial ribosomal protein bS20 family.

Its function is as follows. Binds directly to 16S ribosomal RNA. The sequence is that of Small ribosomal subunit protein bS20 from Chlorobium luteolum (strain DSM 273 / BCRC 81028 / 2530) (Pelodictyon luteolum).